We begin with the raw amino-acid sequence, 42 residues long: Photosystem I reaction center subunit IX (42 aa).

A helical transmembrane segment spans residues Tyr-7–Ile-27.

It belongs to the PsaJ family.

The protein resides in the plastid. It localises to the chloroplast thylakoid membrane. Its function is as follows. May help in the organization of the PsaE and PsaF subunits. This Zygnema circumcarinatum (Green alga) protein is Photosystem I reaction center subunit IX.